A 341-amino-acid polypeptide reads, in one-letter code: Glyceraldehyde-3-phosphate dehydrogenase, cytosolic (341 aa).

NAD(+)-binding positions include 14-15 and aspartate 36; that span reads RI. D-glyceraldehyde 3-phosphate contacts are provided by residues 153-155, threonine 184, 213-214, and arginine 236; these read SCT and TG. The Nucleophile role is filled by cysteine 154. Asparagine 318 is an NAD(+) binding site.

The protein belongs to the glyceraldehyde-3-phosphate dehydrogenase family. In terms of assembly, homotetramer.

Its subcellular location is the cytoplasm. The catalysed reaction is D-glyceraldehyde 3-phosphate + phosphate + NAD(+) = (2R)-3-phospho-glyceroyl phosphate + NADH + H(+). It functions in the pathway carbohydrate degradation; glycolysis; pyruvate from D-glyceraldehyde 3-phosphate: step 1/5. In terms of biological role, key enzyme in glycolysis that catalyzes the first step of the pathway by converting D-glyceraldehyde 3-phosphate (G3P) into 3-phospho-D-glyceroyl phosphate. Essential for the maintenance of cellular ATP levels and carbohydrate metabolism. In Chlamydomonas reinhardtii (Chlamydomonas smithii), this protein is Glyceraldehyde-3-phosphate dehydrogenase, cytosolic (GAPC).